The following is a 754-amino-acid chain: MTILTHTLGFPRVGLRRELKKAQESYWAGNTTREALLTVGRELRARHWEQQKQAGIDLLPVGDFAWYDHVLTTSLLLGNVPARHQNNDGSVDIDTLFRIGRGRAPTGEPAAAAEMTKWFNTNYHYIVPEFSKGQQFRLTWTQLLEEVDEALALGHKIKPVLLGPVTYLWLGKVKGEPFDRLTLLKDILPVYQHVLAELAKRGIEWVQIDEPALVLELPQAWLDAFKPAYDALAGQVKLLLTTYFEGVTPNLDTIIALPVQGLHVDLIHGKDDVAELHQRLPVDWLLSAGLINGRNVWRADLTEKYAQINAIVGKRALWVASSCSLLHSPIDLSVETRLDTEVKSWFAFALQKCGELALLRDALNSGETAALEEWSAPIQARRHSRRVHNAAVEKRLAAITAQDSQRENPYEVRAEAQRARFKLPAWPTTTIGSFPQTTEIRGLRLDFKKGNLDANNYRTGIAEHIKQAIIEQERLGLDVLVHGEAERNDMVEYFGEHLDGFVFTQNGWVQSYGSRCVKPPVVIGDISRPAPITVEWAKYAQSLTDKPVKGMLTGPVTILCWSFPREDVTRETIAKQIALALRDEVADLEAAGIGIIQIDEPALREGLPLRRSDWDAYLEWGVEAFRINAAVAKDETQIHTHMCYCEFNDIMDSIAALDADVITIETSRSDMELLESFEAFDYPNEIGPGVYDIHSPNVPSVEWIEALLKKAAQRIPAQRLWVNPDCGLKTRGWPETRAALANMVKAAHNLRQAK.

Residues 17–20 (RELK) and lysine 117 each bind 5-methyltetrahydropteroyltri-L-glutamate. Residues 431 to 433 (IGS) and glutamate 484 each bind L-homocysteine. L-methionine is bound by residues 431-433 (IGS) and glutamate 484. Residues 515 to 516 (RC) and tryptophan 561 each bind 5-methyltetrahydropteroyltri-L-glutamate. Residue aspartate 599 participates in L-homocysteine binding. Aspartate 599 is an L-methionine binding site. 5-methyltetrahydropteroyltri-L-glutamate is bound at residue glutamate 605. Residues histidine 641, cysteine 643, and glutamate 665 each coordinate Zn(2+). The active-site Proton donor is histidine 694. Cysteine 726 provides a ligand contact to Zn(2+).

Belongs to the vitamin-B12 independent methionine synthase family. Zn(2+) is required as a cofactor.

It carries out the reaction 5-methyltetrahydropteroyltri-L-glutamate + L-homocysteine = tetrahydropteroyltri-L-glutamate + L-methionine. It functions in the pathway amino-acid biosynthesis; L-methionine biosynthesis via de novo pathway; L-methionine from L-homocysteine (MetE route): step 1/1. Functionally, catalyzes the transfer of a methyl group from 5-methyltetrahydrofolate to homocysteine resulting in methionine formation. This chain is 5-methyltetrahydropteroyltriglutamate--homocysteine methyltransferase, found in Salmonella dublin (strain CT_02021853).